A 295-amino-acid polypeptide reads, in one-letter code: Serpentine receptor class gamma-53 (295 aa).

The next 6 membrane-spanning stretches (helical) occupy residues 7–27 (IWLC…VLLS), 39–61 (VITM…RMVF), 121–141 (FYLL…QLLY), 173–193 (CFMS…LYQV), 211–230 (MSLI…AWQT), and 241–261 (IELL…ILLI).

The protein belongs to the nematode receptor-like protein srg family.

It is found in the membrane. The polypeptide is Serpentine receptor class gamma-53 (srg-53) (Caenorhabditis elegans).